The chain runs to 360 residues: Phenylalanine--tRNA ligase alpha subunit (360 aa).

Glutamate 260 lines the Mg(2+) pocket.

It belongs to the class-II aminoacyl-tRNA synthetase family. Phe-tRNA synthetase alpha subunit type 1 subfamily. As to quaternary structure, tetramer of two alpha and two beta subunits. Mg(2+) serves as cofactor.

The protein resides in the cytoplasm. It catalyses the reaction tRNA(Phe) + L-phenylalanine + ATP = L-phenylalanyl-tRNA(Phe) + AMP + diphosphate + H(+). The chain is Phenylalanine--tRNA ligase alpha subunit from Methylobacterium sp. (strain 4-46).